The sequence spans 422 residues: GTPase Obg (422 aa).

The 156-residue stretch at 2–157 (AKFIDEIKLT…YLAHIVLKVM (156 aa)) folds into the Obg domain. Positions 158–325 (SDVGIIGKPS…LKGKIWKILE (168 aa)) constitute an OBG-type G domain. Residues 164–171 (GKPSAGKS), 189–193 (FTTLV), 210–213 (DLPG), 279–282 (NKSD), and 306–308 (SAI) contribute to the GTP site. 2 residues coordinate Mg(2+): Ser-171 and Thr-191. Positions 334–420 (EEEETEENVE…ILDYEFEWDG (87 aa)) constitute an OCT domain.

This sequence belongs to the TRAFAC class OBG-HflX-like GTPase superfamily. OBG GTPase family. In terms of assembly, monomer. The cofactor is Mg(2+).

The protein localises to the cytoplasm. In terms of biological role, an essential GTPase which binds GTP, GDP and possibly (p)ppGpp with moderate affinity, with high nucleotide exchange rates and a fairly low GTP hydrolysis rate. Plays a role in control of the cell cycle, stress response, ribosome biogenesis and in those bacteria that undergo differentiation, in morphogenesis control. The polypeptide is GTPase Obg (Mycoplasmopsis agalactiae (strain NCTC 10123 / CIP 59.7 / PG2) (Mycoplasma agalactiae)).